The primary structure comprises 216 residues: FMN-dependent NADH:quinone oxidoreductase (216 aa).

FMN-binding positions include 15–17 (SVS) and 139–142 (SRGG).

The protein belongs to the azoreductase type 1 family. Homodimer. Requires FMN as cofactor.

It carries out the reaction 2 a quinone + NADH + H(+) = 2 a 1,4-benzosemiquinone + NAD(+). The enzyme catalyses N,N-dimethyl-1,4-phenylenediamine + anthranilate + 2 NAD(+) = 2-(4-dimethylaminophenyl)diazenylbenzoate + 2 NADH + 2 H(+). Quinone reductase that provides resistance to thiol-specific stress caused by electrophilic quinones. In terms of biological role, also exhibits azoreductase activity. Catalyzes the reductive cleavage of the azo bond in aromatic azo compounds to the corresponding amines. The protein is FMN-dependent NADH:quinone oxidoreductase of Acidovorax ebreus (strain TPSY) (Diaphorobacter sp. (strain TPSY)).